Consider the following 345-residue polypeptide: Arginine N-succinyltransferase (345 aa).

Leu-125 contacts succinyl-CoA. The Proton donor role is filled by His-229.

Belongs to the arginine N-succinyltransferase family.

It catalyses the reaction succinyl-CoA + L-arginine = N(2)-succinyl-L-arginine + CoA + H(+). It participates in amino-acid degradation; L-arginine degradation via AST pathway; L-glutamate and succinate from L-arginine: step 1/5. Functionally, catalyzes the transfer of succinyl-CoA to arginine to produce N(2)-succinylarginine. This Yersinia enterocolitica serotype O:8 / biotype 1B (strain NCTC 13174 / 8081) protein is Arginine N-succinyltransferase.